A 335-amino-acid chain; its full sequence is Flagellar P-ring protein (335 aa).

Residues 1–24 (MNKITNFLILSAVLFFSLIESANA) form the signal peptide.

It belongs to the FlgI family. As to quaternary structure, the basal body constitutes a major portion of the flagellar organelle and consists of four rings (L,P,S, and M) mounted on a central rod.

The protein localises to the periplasm. It is found in the bacterial flagellum basal body. Assembles around the rod to form the L-ring and probably protects the motor/basal body from shearing forces during rotation. The chain is Flagellar P-ring protein from Bdellovibrio bacteriovorus (strain ATCC 15356 / DSM 50701 / NCIMB 9529 / HD100).